Here is an 896-residue protein sequence, read N- to C-terminus: Translation initiation factor IF-2 (896 aa).

A disordered region spans residues 32 to 306; the sequence is LAQAGSSDTK…HKTKKQSEEH (275 aa). Polar residues-rich tracts occupy residues 35–48 and 114–126; these read AGSS…VSKA and ADST…SSQE. Positions 156–170 are enriched in basic and acidic residues; the sequence is ARNEETPIIRTRTEP. The span at 213 to 237 shows a compositional bias: polar residues; it reads QQTRPSVETASTKQQQPSGTNTRPA. The segment covering 256–280 has biased composition (basic and acidic residues); it reads RGPDRDRTKRSDENVKAFTGRDRYG. One can recognise a tr-type G domain in the interval 401–570; that stretch reads IRSPIVAFMG…ALQAEVLELK (170 aa). The interval 410–417 is G1; it reads GHVDHGKT. A GTP-binding site is contributed by 410–417; it reads GHVDHGKT. A G2 region spans residues 435–439; sequence AITQH. The segment at 456–459 is G3; it reads DTPG. GTP is bound by residues 456–460 and 510–513; these read DTPGH and NKCD. The G4 stretch occupies residues 510-513; that stretch reads NKCD. Residues 546–548 are G5; it reads SAK.

Belongs to the TRAFAC class translation factor GTPase superfamily. Classic translation factor GTPase family. IF-2 subfamily.

The protein resides in the cytoplasm. Functionally, one of the essential components for the initiation of protein synthesis. Protects formylmethionyl-tRNA from spontaneous hydrolysis and promotes its binding to the 30S ribosomal subunits. Also involved in the hydrolysis of GTP during the formation of the 70S ribosomal complex. The polypeptide is Translation initiation factor IF-2 (infB) (Chlamydia muridarum (strain MoPn / Nigg)).